A 593-amino-acid chain; its full sequence is Calnexin (593 aa).

Residues 1-20 (MEGKWLLCMLLVLGTTIVQA) form the signal peptide. The Lumenal segment spans residues 21 to 482 (HEGHDDDMID…QMIEAAEERP (462 aa)). Positions 75 and 118 each coordinate Ca(2+). N6-acetyllysine is present on lysine 138. An intrachain disulfide couples cysteine 161 to cysteine 195. An alpha-D-glucoside is bound by residues tyrosine 165, lysine 167, tyrosine 186, and aspartate 193. Residues 261–346 (GNLLNDMTPP…AEKPEDWDED (86 aa)) are disordered. Positions 277–410 (IEDPEDQKPE…RKIPNPDFFE (134 aa)) are p domain (Extended arm). 5 consecutive repeat copies span residues 279-290 (DPEDQKPEDWDE), 296-307 (DPDAVKPDDWNE), 315-326 (DEEATKPDGWLD), 334-345 (DPDAEKPEDWDE), and 349-359 (GEWEAPQIANP). 4 X approximate repeats stretches follow at residues 279-345 (DPED…DWDE) and 349-406 (GEWE…IPNP). Over residues 282–320 (DQKPEDWDERPKIPDPDAVKPDDWNEDAPAKIPDEEATK) the composition is skewed to basic and acidic residues. Residues 324–346 (WLDDEPEYVPDPDAEKPEDWDED) are compositionally biased toward acidic residues. The tract at residues 327–360 (DEPEYVPDPDAEKPEDWDEDMDGEWEAPQIANPK) is interaction with PPIB. The cysteines at positions 361 and 367 are disulfide-linked. A run of 3 repeats spans residues 368–378 (GVWQRPMIDNP), 382–392 (GKWKPPMIDNP), and 396–406 (GIWKPRKIPNP). Residue glutamate 426 coordinates an alpha-D-glucoside. Aspartate 437 contacts Ca(2+). The helical transmembrane segment at 483 to 503 (WLWVVYVLTVALPVFLVILFC) threads the bilayer. 2 S-palmitoyl cysteine lipidation sites follow: cysteine 503 and cysteine 504. Residues 504–593 (CSGKKQSSPV…SPRNRKPRRE (90 aa)) are Cytoplasmic-facing. Residues 504–593 (CSGKKQSSPV…SPRNRKPRRE (90 aa)) form a sufficient to mediate interaction with SGIP1 region. Residues 511–593 (SPVEYKKTDA…SPRNRKPRRE (83 aa)) form a disordered region. Over residues 526 to 548 (KEEEEEKEEEKDKGDEEEEGEEK) the composition is skewed to acidic residues. Position 555 is a phosphoserine (serine 555). Threonine 563 carries the phosphothreonine modification. Phosphoserine; by MAPK3 is present on serine 565. Residue serine 584 is modified to Phosphoserine.

Belongs to the calreticulin family. Interacts with MAPK3/ERK1. Interacts with KCNH2. Associates with ribosomes. Interacts with SGIP1; involved in negative regulation of endocytosis. The palmitoylated form interacts with the ribosome-translocon complex component SSR1, promoting efficient folding of glycoproteins. Interacts with SERPINA2P/SERPINA2 and with the S and Z variants of SERPINA1. Interacts with PPIB. Interacts with ZNRF4. Interacts with SMIM22. Interacts with TMX2. Interacts with TMEM35A/NACHO and CHRNA7. Interacts with reticulophagy regulators RETREG2 and RETREG3. Interacts with DNM1L; may form part of a larger protein complex at the ER-mitochondrial interface during mitochondrial fission. Interacts with ADAM7. Phosphorylated at Ser-565 by MAPK3/ERK1. Phosphorylation by MAPK3/ERK1 increases its association with ribosomes. Post-translationally, palmitoylation by DHHC6 leads to the preferential localization to the perinuclear rough ER. It mediates the association of calnexin with the ribosome-translocon complex (RTC) which is required for efficient folding of glycosylated proteins. In terms of processing, ubiquitinated, leading to proteasomal degradation. Probably ubiquitinated by ZNRF4.

It is found in the endoplasmic reticulum membrane. The protein resides in the mitochondrion membrane. The protein localises to the melanosome membrane. In terms of biological role, calcium-binding protein that interacts with newly synthesized monoglucosylated glycoproteins in the endoplasmic reticulum. It may act in assisting protein assembly and/or in the retention within the ER of unassembled protein subunits. It seems to play a major role in the quality control apparatus of the ER by the retention of incorrectly folded proteins. Associated with partial T-cell antigen receptor complexes that escape the ER of immature thymocytes, it may function as a signaling complex regulating thymocyte maturation. Additionally it may play a role in receptor-mediated endocytosis at the synapse. This Canis lupus familiaris (Dog) protein is Calnexin (CANX).